A 127-amino-acid polypeptide reads, in one-letter code: Protein LLP homolog (127 aa).

Basic residues predominate over residues 1–21 (MAKSLRSKWKRKMRAEKRKKN). The interval 1 to 24 (MAKSLRSKWKRKMRAEKRKKNAPK) is disordered. Glycyl lysine isopeptide (Lys-Gly) (interchain with G-Cter in SUMO2) cross-links involve residues Lys65 and Lys72. The span at 98–120 (RQRKRLKAKRERKKGKSKVKAMK) shows a compositional bias: basic residues. The tract at residues 98–127 (RQRKRLKAKRERKKGKSKVKAMKAAKGLTW) is disordered.

It belongs to the learning-associated protein family. As to quaternary structure, interacts with CTCF, MYO1C and with the transcriptional machinery, including RNA polymerase II and TBP.

The protein localises to the nucleus. It is found in the nucleolus. Its subcellular location is the chromosome. Its function is as follows. In hippocampal neurons, regulates dendritic and spine growth and synaptic transmission. The sequence is that of Protein LLP homolog (LLPH) from Bos taurus (Bovine).